The sequence spans 99 residues: A-type ATP synthase subunit F (99 aa).

The protein belongs to the V-ATPase F subunit family. Has multiple subunits with at least A(3), B(3), C, D, E, F, H, I and proteolipid K(x).

It localises to the cell membrane. Functionally, component of the A-type ATP synthase that produces ATP from ADP in the presence of a proton gradient across the membrane. The protein is A-type ATP synthase subunit F of Methanococcus maripaludis (strain C6 / ATCC BAA-1332).